The sequence spans 210 residues: Meiotic coiled-coil protein 7 (210 aa).

A coiled-coil region spans residues 77–148 (KRSRESVLGS…LKTQLSNLNH (72 aa)).

The protein belongs to the MND1 family. Interacts with meu13.

It localises to the cytoplasm. The protein localises to the nucleus. In terms of biological role, required for meiotic recombination. The chain is Meiotic coiled-coil protein 7 (mcp7) from Schizosaccharomyces pombe (strain 972 / ATCC 24843) (Fission yeast).